Here is a 226-residue protein sequence, read N- to C-terminus: Lipoprotein-releasing system ATP-binding protein LolD (226 aa).

One can recognise an ABC transporter domain in the interval Phe5–Val225. ATP is bound at residue Gly40–Ser47.

Belongs to the ABC transporter superfamily. Lipoprotein translocase (TC 3.A.1.125) family. As to quaternary structure, the complex is composed of two ATP-binding proteins (LolD) and two transmembrane proteins (LolC and LolE).

The protein resides in the cell inner membrane. In terms of biological role, part of the ABC transporter complex LolCDE involved in the translocation of mature outer membrane-directed lipoproteins, from the inner membrane to the periplasmic chaperone, LolA. Responsible for the formation of the LolA-lipoprotein complex in an ATP-dependent manner. This Ehrlichia canis (strain Jake) protein is Lipoprotein-releasing system ATP-binding protein LolD.